The sequence spans 389 residues: MAAVAAEARVFLEVRRRLQSALLILGDSKEGGLPMAVSVTPSSLRMQSPGGCTELRLPAGVRLAPSTCRGLQHVPGDGLHLRLHARAESRPELISVFNQSSQDQECCTFYCQSCGEVIIRDRMLLRVLPLPGDNWGALVDEWCCHPDPFANKPLHPRENDCFTGDCFYLVNLKSDLWQPRPEGAPVETHHLSSENHLKLKPKANTKVICKRCKVMLGETVSSETTKFYMTEIIILPSERNFPIIPRSQFVQSVLAQCVVELSSARSTFRFTIQGHDDKVYILLWLLNSDSLVIESLGQYTNIKKFPVLEDVLKPDSNSACNAVKVLYQPCIKSRNAELSSLWENDLSVHSLTLPSTTCLELLLILSKSNATLPPSLRCMNSFQVAFLKM.

Ala2 is modified (N-acetylalanine). Residues Pro129 to Asn159 carry the BRAT1-like motif motif. Cys144 is a binding site for Zn(2+). Positions Leu235–Cys257 are interaction with UBE2C. Residues Leu353 to Met389 form an HECT-like region.

In terms of assembly, interacts with UBE2C/UbcH10 (E2 ubiquitin-conjugating enzyme). In vitro, interacts with cyclin-B. In terms of processing, ubiquitinated by UBCH10 (E2 ubiquitin-conjugating enzyme).

The protein localises to the cytoplasm. The catalysed reaction is S-ubiquitinyl-[E2 ubiquitin-conjugating enzyme]-L-cysteine + [acceptor protein]-L-lysine = [E2 ubiquitin-conjugating enzyme]-L-cysteine + N(6)-ubiquitinyl-[acceptor protein]-L-lysine.. The protein operates within protein modification; protein ubiquitination. Its function is as follows. E3 ubiquitin-protein ligase which accepts ubiquitin from specific E2 ubiquitin-conjugating enzymes, and transfers it to substrates, generally promoting their degradation by the proteasome. Independently of its E3 ubiquitin-protein ligase activity, acts as an inhibitor of CPSF3 endonuclease activity by blocking CPSF3 active site. This Bos taurus (Bovine) protein is E3 ubiquitin-protein ligase E3D (UBE3D).